The primary structure comprises 199 residues: uncharacterized protein (199 aa).

This is an uncharacterized protein from Connochaetes taurinus (Blue wildebeest).